Reading from the N-terminus, the 610-residue chain is Ectonucleoside triphosphate diphosphohydrolase 7 (610 aa).

Topologically, residues 1–28 (MARISFSCLFPASWHCSLPSVTQFSRQR) are cytoplasmic. Residues 29–49 (VALLIISVAVFILVFAAVADL) traverse the membrane as a helical segment. Over 50 to 555 (QLWSSRAFRD…VSWFRISFVY (506 aa)) the chain is Vesicular. E217 serves as the catalytic Proton acceptor. Residues N336 and N400 are each glycosylated (N-linked (GlcNAc...) asparagine). Cysteines 454 and 483 form a disulfide. A helical membrane pass occupies residues 556–576 (NHYLFFACILVVLLSIVLYIL). The Cytoplasmic portion of the chain corresponds to 577 to 610 (RLRRIHRRQARASALDLLLMEEGVHTVLEPGIPT).

Belongs to the GDA1/CD39 NTPase family. Requires Ca(2+) as cofactor. Mg(2+) serves as cofactor.

It localises to the cytoplasmic vesicle membrane. The enzyme catalyses a ribonucleoside 5'-triphosphate + H2O = a ribonucleoside 5'-diphosphate + phosphate + H(+). It catalyses the reaction UTP + H2O = UDP + phosphate + H(+). It carries out the reaction GTP + H2O = GDP + phosphate + H(+). The catalysed reaction is CTP + H2O = CDP + phosphate + H(+). In terms of biological role, catalyzes the hydrolysis of nucleoside triphosphates and diphosphates in a calcium- or magnesium-dependent manner. Preferentially hydrolyzes nucleoside 5'-triphosphates, with substrate preference for UTP &gt; GTP &gt; CTP. Hydrolyzes ATP and nucleoside diphosphates only to a minor extent. The polypeptide is Ectonucleoside triphosphate diphosphohydrolase 7 (entpd7) (Xenopus tropicalis (Western clawed frog)).